Here is a 210-residue protein sequence, read N- to C-terminus: Guanylate kinase (210 aa).

Residues 23–203 form the Guanylate kinase-like domain; it reads GRVVVLSGPS…ACAELVSLLV (181 aa). 30-37 contributes to the ATP binding site; it reads GPSAVGKS.

The protein belongs to the guanylate kinase family.

Its subcellular location is the cytoplasm. It catalyses the reaction GMP + ATP = GDP + ADP. In terms of biological role, essential for recycling GMP and indirectly, cGMP. This Mycobacterium leprae (strain TN) protein is Guanylate kinase (gmk).